The sequence spans 213 residues: Large ribosomal subunit protein uL3 (213 aa).

It belongs to the universal ribosomal protein uL3 family. As to quaternary structure, part of the 50S ribosomal subunit. Forms a cluster with proteins L14 and L19.

In terms of biological role, one of the primary rRNA binding proteins, it binds directly near the 3'-end of the 23S rRNA, where it nucleates assembly of the 50S subunit. The sequence is that of Large ribosomal subunit protein uL3 from Bifidobacterium longum subsp. infantis (strain ATCC 15697 / DSM 20088 / JCM 1222 / NCTC 11817 / S12).